The primary structure comprises 193 residues: Adenine phosphoribosyltransferase (193 aa).

The protein belongs to the purine/pyrimidine phosphoribosyltransferase family. In terms of assembly, homodimer.

It localises to the cytoplasm. It catalyses the reaction AMP + diphosphate = 5-phospho-alpha-D-ribose 1-diphosphate + adenine. Its pathway is purine metabolism; AMP biosynthesis via salvage pathway; AMP from adenine: step 1/1. Its function is as follows. Catalyzes a salvage reaction resulting in the formation of AMP, that is energically less costly than de novo synthesis. The protein is Adenine phosphoribosyltransferase of Chromobacterium violaceum (strain ATCC 12472 / DSM 30191 / JCM 1249 / CCUG 213 / NBRC 12614 / NCIMB 9131 / NCTC 9757 / MK).